The chain runs to 565 residues: Glycine/sarcosine/dimethylglycine N-methyltransferase (565 aa).

The segment covering 1 to 10 (MTKSVDDLAR) has biased composition (basic and acidic residues). Positions 1-34 (MTKSVDDLARGDQAGDEQDPVHREQQTFGDNPLE) are disordered. Residues Tyr45, Trp53, Arg62, Ala86, Asp107, 134–135 (DW), and Leu152 contribute to the S-adenosyl-L-methionine site. Positions 154, 187, and 226 each coordinate substrate.

The protein belongs to the class I-like SAM-binding methyltransferase superfamily. Glycine N-methyltransferase family. As to quaternary structure, monomer.

The catalysed reaction is glycine + 2 S-adenosyl-L-methionine = N,N-dimethylglycine + 2 S-adenosyl-L-homocysteine + 2 H(+). The enzyme catalyses sarcosine + 2 S-adenosyl-L-methionine = glycine betaine + 2 S-adenosyl-L-homocysteine + 2 H(+). It catalyses the reaction glycine + S-adenosyl-L-methionine = sarcosine + S-adenosyl-L-homocysteine + H(+). It carries out the reaction sarcosine + S-adenosyl-L-methionine = N,N-dimethylglycine + S-adenosyl-L-homocysteine + H(+). The catalysed reaction is N,N-dimethylglycine + S-adenosyl-L-methionine = glycine betaine + S-adenosyl-L-homocysteine + H(+). It functions in the pathway amine and polyamine biosynthesis; betaine biosynthesis via glycine pathway; betaine from glycine: step 1/3. Its pathway is amine and polyamine biosynthesis; betaine biosynthesis via glycine pathway; betaine from glycine: step 2/3. It participates in amine and polyamine biosynthesis; betaine biosynthesis via glycine pathway; betaine from glycine: step 3/3. Catalyzes the methylation of glycine, sarcosine and dimethylglycine to sarcosine, dimethylglycine and betaine, respectively, with S-adenosylmethionine (AdoMet) acting as the methyl donor. Shows low level of activity on glycine when expressed in E.coli. The sequence is that of Glycine/sarcosine/dimethylglycine N-methyltransferase from Actinopolyspora halophila.